Reading from the N-terminus, the 463-residue chain is Interleukin enhancer-binding factor 2 (463 aa).

R94 is modified (asymmetric dimethylarginine; alternate). R94 bears the Omega-N-methylarginine; alternate mark. The DZF domain maps to 108–444; that stretch reads RHILAYDWLA…PEKKEGEEEE (337 aa). Residue R145 is modified to Omega-N-methylarginine. Residue K166 forms a Glycyl lysine isopeptide (Lys-Gly) (interchain with G-Cter in ubiquitin) linkage. Residues S173 and S189 each carry the phosphoserine modification. Glycyl lysine isopeptide (Lys-Gly) (interchain with G-Cter in SUMO2) cross-links involve residues K259 and K437. Residues 424–463 form a disordered region; the sequence is VTPSEKAYEKPPEKKEGEEEEENTEEPPQGEEEESMETQE. Over residues 429–440 the composition is skewed to basic and acidic residues; sequence KAYEKPPEKKEG. Residues 441–463 are compositionally biased toward acidic residues; sequence EEEEENTEEPPQGEEEESMETQE. A Phosphothreonine modification is found at T461.

Forms heterodimers with ILF3. ILF2-ILF3 heterodimers may also bind to PRKDC/XRCC7: this may stabilize the interaction of PRKDC/XRCC7 and the heterodimeric complex of G22P1/KU70 and XRCC5/KU80. Forms a complex with ILF3, YLPM1, KHDRBS1, RBMX, NCOA5 and PPP1CA. Identified in a IGF2BP1-dependent mRNP granule complex containing untranslated mRNAs. Interacts with IGF2BP1. Interacts with CRBN; this interaction promotes ubiquitination and subsequent degradation of ILF2. Post-translationally, ubiquitinated at Lys-166 by CRBN with polyubiquitin chains by the CUL4-RING E3 ligase (CRL4-CRBN) and then degraded by the proteasome.

The protein localises to the nucleus. Its subcellular location is the nucleolus. It is found in the cytoplasm. Its function is as follows. Chromatin-interacting protein that forms a stable heterodimer with interleukin enhancer-binding factor 3/ILF3 and plays a role in several biological processes including transcription, innate immunity or cell growth. Essential for the efficient reshuttling of ILF3 (isoform 1 and isoform 2) into the nucleus. Together with ILF3, forms an RNA-binding complex that is required for mitotic progression and cytokinesis by regulating the expression of a cluster of mitotic genes. Mechanistically, competes with STAU1/STAU2-mediated mRNA decay. Plays also a role in the inhibition of various viruses including Japanese encephalitis virus or enterovirus 71. This Rattus norvegicus (Rat) protein is Interleukin enhancer-binding factor 2 (Ilf2).